We begin with the raw amino-acid sequence, 632 residues long: MSPDQTAVEYTAKDIEVLDDLEAVRKRPGMYIGGVGVRGLHHLLWEVVDNAVDEALAGYCDTIKVSLHKDGSASVEDNGRGIPTEMHELGKSALEIVMTKLHAGGKFSKKVYRVSGGLHGVGVSVVNALSEWLEVWVKRNGKIYYQKYQRGSRSPEAGHRTEVLGETKEHGTTVRFKPDREIFETTEFKYEIVAQRLKELAYLNRGLKIILFDEREGKEETFHFEDGIIGLVRSLNRNRKPLHEPIYIETTKDGVSVEVAIQFTDSDVENIQAFANNINTSEGGSHVVGFRAGLTRAVNEYGKKHLKKFEPVTGVDIREGLTAVISVKVPEPQFEGQTKTKLTNSDVKTVVESAVYSGVLRWLEENPAQAETLLNKFILNKKAREAAKRAKELVKRKNELITTLPGKLADCSSKNPEERELFIVEGESAGGSAKQARDRRFQAILPIKGKIINVEKAGMARVLKNDEIKAIISAIGAGIGKDFDITKARYRRIIIMTDADVDGAHIRTLLLTFFYRYMRPLIESGYLYIAQPPLYQIKKGKKSYYAYSDEELKRTLEQVGGGEVQRYKGLGEMNPQQLWETTMNPENRILIQVTLEDAKRADELFSILMGEDVESRRNFIMAHSKEVKNLDI.

Residues 419–533 (RELFIVEGES…SGYLYIAQPP (115 aa)) enclose the Toprim domain. The Mg(2+) site is built by Glu-425, Asp-498, and Asp-500.

This sequence belongs to the type II topoisomerase GyrB family. In terms of assembly, heterotetramer, composed of two GyrA and two GyrB chains. In the heterotetramer, GyrA contains the active site tyrosine that forms a transient covalent intermediate with DNA, while GyrB binds cofactors and catalyzes ATP hydrolysis. Mg(2+) is required as a cofactor. Requires Mn(2+) as cofactor. It depends on Ca(2+) as a cofactor.

It localises to the cytoplasm. It carries out the reaction ATP-dependent breakage, passage and rejoining of double-stranded DNA.. In terms of biological role, a type II topoisomerase that negatively supercoils closed circular double-stranded (ds) DNA in an ATP-dependent manner to modulate DNA topology and maintain chromosomes in an underwound state. Negative supercoiling favors strand separation, and DNA replication, transcription, recombination and repair, all of which involve strand separation. Also able to catalyze the interconversion of other topological isomers of dsDNA rings, including catenanes and knotted rings. Type II topoisomerases break and join 2 DNA strands simultaneously in an ATP-dependent manner. The sequence is that of DNA gyrase subunit B from Archaeoglobus fulgidus (strain ATCC 49558 / DSM 4304 / JCM 9628 / NBRC 100126 / VC-16).